Reading from the N-terminus, the 424-residue chain is CinA-like protein (424 aa).

The protein belongs to the CinA family.

This is CinA-like protein from Syntrophobacter fumaroxidans (strain DSM 10017 / MPOB).